The primary structure comprises 66 residues: ATP synthase F(0) complex subunit 8 (66 aa).

A helical membrane pass occupies residues 8–24; that stretch reads TWLTMILSMFLVLFIIF. The residue at position 54 (Lys54) is an N6-acetyllysine; alternate. The residue at position 54 (Lys54) is an N6-succinyllysine; alternate. Lys57 carries the post-translational modification N6-acetyllysine.

The protein belongs to the ATPase protein 8 family. Component of the ATP synthase complex composed at least of ATP5F1A/subunit alpha, ATP5F1B/subunit beta, ATP5MC1/subunit c (homooctomer), MT-ATP6/subunit a, MT-ATP8/subunit 8, ATP5ME/subunit e, ATP5MF/subunit f, ATP5MG/subunit g, ATP5MK/subunit k, ATP5MJ/subunit j, ATP5F1C/subunit gamma, ATP5F1D/subunit delta, ATP5F1E/subunit epsilon, ATP5PF/subunit F6, ATP5PB/subunit b, ATP5PD/subunit d, ATP5PO/subunit OSCP. ATP synthase complex consists of a soluble F(1) head domain (subunits alpha(3) and beta(3)) - the catalytic core - and a membrane F(0) domain - the membrane proton channel (subunits c, a, 8, e, f, g, k and j). These two domains are linked by a central stalk (subunits gamma, delta, and epsilon) rotating inside the F1 region and a stationary peripheral stalk (subunits F6, b, d, and OSCP). Interacts with PRICKLE3.

It localises to the mitochondrion membrane. Functionally, subunit 8, of the mitochondrial membrane ATP synthase complex (F(1)F(0) ATP synthase or Complex V) that produces ATP from ADP in the presence of a proton gradient across the membrane which is generated by electron transport complexes of the respiratory chain. ATP synthase complex consist of a soluble F(1) head domain - the catalytic core - and a membrane F(1) domain - the membrane proton channel. These two domains are linked by a central stalk rotating inside the F(1) region and a stationary peripheral stalk. During catalysis, ATP synthesis in the catalytic domain of F(1) is coupled via a rotary mechanism of the central stalk subunits to proton translocation. In vivo, can only synthesize ATP although its ATP hydrolase activity can be activated artificially in vitro. Part of the complex F(0) domain. In Ovis aries (Sheep), this protein is ATP synthase F(0) complex subunit 8.